Here is a 208-residue protein sequence, read N- to C-terminus: Ribosomal RNA large subunit methyltransferase E (208 aa).

5 residues coordinate S-adenosyl-L-methionine: Gly63, Trp65, Asp83, Asp99, and Asp124. Lys164 serves as the catalytic Proton acceptor.

The protein belongs to the class I-like SAM-binding methyltransferase superfamily. RNA methyltransferase RlmE family.

Its subcellular location is the cytoplasm. It carries out the reaction uridine(2552) in 23S rRNA + S-adenosyl-L-methionine = 2'-O-methyluridine(2552) in 23S rRNA + S-adenosyl-L-homocysteine + H(+). In terms of biological role, specifically methylates the uridine in position 2552 of 23S rRNA at the 2'-O position of the ribose in the fully assembled 50S ribosomal subunit. This Salmonella agona (strain SL483) protein is Ribosomal RNA large subunit methyltransferase E.